Reading from the N-terminus, the 691-residue chain is MPRSHPIEDYRNFGIMAHIDAGKTTTTERILYYSGKSHKIGEVHDGAATMDWMEQEQERGITITSAATTTFWNGRRLNIIDTPGHVDFTIEVERSLRVLDGAVCVLDGNQGVEPQTETVWRQADKYNVPRIVFVNKMDKIGADFYRCVEDIKTKVGGRPVCIQLPIGSEADFKGIIDLVRMKAVVWEDEALGAKYHDEEIPDDLKEKAIHYRNLLVEAAVELDDDAMTAYLEGVEPDEALLKLLIRKAVRQITFIPVLCGSAFKNKGVQPLLDAVVDYLPTPIDREAIKGVDVNTGEETVRLPSDSEPFSMLAFKIMDDPFVGSITFARVYSGKIESGTSVVNSTKDKKERIGRMLLMHANNREDIKEAYAGDIVALAGLKETRTGDTLCDVNKPVILERMEFPEPVIEIAIEPKSKADQEKLGIALSKLAAEDPSFRVSTDQESGQTILKGMGELHLDIKVDILKRTYKVDANIGAPQVAYREKLMRRVEIDETHKKQTGGTGQFARVKMIFEPNEAAAGNAFESNIVGGAVPKEYIPGVEKGLYSVLNSGVLAGFPVVDVKATLIDGAFHEVDSSVLAFEICSRAATRRALKEGGSVLLEPIMKVEVTTPEEYTGSVMGDLLGRRGQVQGQDMRGNAVVINAMVPLANMFGYVNQLRSFSQGRANYSMQFDHYEQVPANEAAKVQAKYA.

A tr-type G domain is found at E8–I283. GTP contacts are provided by residues A17–T24, D81–H85, and N135–D138.

The protein belongs to the TRAFAC class translation factor GTPase superfamily. Classic translation factor GTPase family. EF-G/EF-2 subfamily.

Its subcellular location is the cytoplasm. Functionally, catalyzes the GTP-dependent ribosomal translocation step during translation elongation. During this step, the ribosome changes from the pre-translocational (PRE) to the post-translocational (POST) state as the newly formed A-site-bound peptidyl-tRNA and P-site-bound deacylated tRNA move to the P and E sites, respectively. Catalyzes the coordinated movement of the two tRNA molecules, the mRNA and conformational changes in the ribosome. The polypeptide is Elongation factor G (Beijerinckia indica subsp. indica (strain ATCC 9039 / DSM 1715 / NCIMB 8712)).